Consider the following 193-residue polypeptide: Holliday junction branch migration complex subunit RuvA (193 aa).

The tract at residues 1–64 is domain I; the sequence is MIGRIAGVLL…EDAHLLYGFL (64 aa). The domain II stretch occupies residues 65–139; sequence TPQERSTFRE…GKLGADLGAM (75 aa). The segment at 139–143 is flexible linker; the sequence is MAGAA. Residues 144–193 form a domain III region; that stretch reads SQSDHASDILNALLALGYSEKEGLAAIKNVPAGTGVSEGIKLALKALSKA.

The protein belongs to the RuvA family. In terms of assembly, homotetramer. Forms an RuvA(8)-RuvB(12)-Holliday junction (HJ) complex. HJ DNA is sandwiched between 2 RuvA tetramers; dsDNA enters through RuvA and exits via RuvB. An RuvB hexamer assembles on each DNA strand where it exits the tetramer. Each RuvB hexamer is contacted by two RuvA subunits (via domain III) on 2 adjacent RuvB subunits; this complex drives branch migration. In the full resolvosome a probable DNA-RuvA(4)-RuvB(12)-RuvC(2) complex forms which resolves the HJ.

The protein resides in the cytoplasm. In terms of biological role, the RuvA-RuvB-RuvC complex processes Holliday junction (HJ) DNA during genetic recombination and DNA repair, while the RuvA-RuvB complex plays an important role in the rescue of blocked DNA replication forks via replication fork reversal (RFR). RuvA specifically binds to HJ cruciform DNA, conferring on it an open structure. The RuvB hexamer acts as an ATP-dependent pump, pulling dsDNA into and through the RuvAB complex. HJ branch migration allows RuvC to scan DNA until it finds its consensus sequence, where it cleaves and resolves the cruciform DNA. In Paraburkholderia phymatum (strain DSM 17167 / CIP 108236 / LMG 21445 / STM815) (Burkholderia phymatum), this protein is Holliday junction branch migration complex subunit RuvA.